The primary structure comprises 286 residues: Meiotically up-regulated gene 64 protein (286 aa).

The protein localises to the cytoplasm. Its function is as follows. Has a role in meiosis. In Schizosaccharomyces pombe (strain 972 / ATCC 24843) (Fission yeast), this protein is Meiotically up-regulated gene 64 protein (mug64).